The sequence spans 387 residues: Patatin-05 (387 aa).

Residues 1-23 (MATTKSVLVLIFMILATTSSTFA) form the signal peptide. Residues 32–230 (LSIDGGGIKG…TVADPALLSV (199 aa)) enclose the PNPLA domain. Positions 36–41 (GGGIKG) match the GXGXXG motif. The GXSXG signature appears at 75–79 (GTSTG). Residue Ser77 is the Nucleophile of the active site. Residues Asn115 and Asn203 are each glycosylated (N-linked (GlcNAc...) asparagine). Catalysis depends on Asp216, which acts as the Proton acceptor. The DGA/G signature appears at 216–218 (DGA).

This sequence belongs to the patatin family. In terms of tissue distribution, tuber.

It localises to the vacuole. Functionally, probable lipolytic acyl hydrolase (LAH), an activity which is thought to be involved in the response of tubers to pathogens. This is Patatin-05 (pat1-k1) from Solanum tuberosum (Potato).